Here is a 453-residue protein sequence, read N- to C-terminus: Cytochrome P450 monooxygenase CYP2 (453 aa).

Residues 13–29 traverse the membrane as a helical segment; that stretch reads MVITMLHGSSTYSLLAS. N-linked (GlcNAc...) asparagine glycosylation is present at N85. C397 provides a ligand contact to heme.

Belongs to the cytochrome P450 family. It depends on heme as a cofactor.

It is found in the membrane. The protein operates within secondary metabolite biosynthesis. Cytochrome P450 monooxygenase; part of the gene cluster that mediates the biosynthesis of a tyrosine-derived cytochalasan acting as a fungal signal recognized by resistant rice plants and leads to avirulence in Pi33 resistant rice cultivars. The first step in the pathway is catalyzed by the hybrid PKS-NRPS ACE1, assisted by the enoyl reductase RAP1, that are responsible for fusion of the tyrosine precursor and the polyketide backbone. The polyketide synthase module (PKS) of ACE1 is responsible for the synthesis of the polyketide backbone and the downstream nonribosomal peptide synthetase (NRPS) amidates the carboxyl end of the polyketide with the tyrosine precursor. Because ACE1 lacks a designated enoylreductase (ER) domain, the required activity is provided the enoyl reductase RAP1. Reduction by the hydrolyase ORFZ, followed by dehydration and intra-molecular Diels-Alder cyclization by the Diels-Alderase ORF3 then yield the required isoindolone-fused macrocycle. A number of oxidative steps catalyzed by the tailoring enzymes identified within the cluster, including cytochrome P450 monooxygenases CYP1 to CYP4, the FAD-linked oxidoreductase OXR2 and the short-chain dehydrogenase/reductase OXR1, are further required to afford the final cytochalasans that confer avirulence and which have still to be identified. The monooxygenase CYP1 has been shown to be a site-selective C-18 hydroxylase whereas the function of CYP3 is the site-selective epoxidation of the C-6/C-7 olefin that is present in some intermediate compounds. Finally, SYN2 and RAP2 are not required for avirulence in Pi33 resistant rice cultivars. In Pyricularia oryzae (strain 70-15 / ATCC MYA-4617 / FGSC 8958) (Rice blast fungus), this protein is Cytochrome P450 monooxygenase CYP2.